A 489-amino-acid chain; its full sequence is Glycogen synthase (489 aa).

Lysine 15 is an ADP-alpha-D-glucose binding site.

This sequence belongs to the glycosyltransferase 1 family. Bacterial/plant glycogen synthase subfamily.

It catalyses the reaction [(1-&gt;4)-alpha-D-glucosyl](n) + ADP-alpha-D-glucose = [(1-&gt;4)-alpha-D-glucosyl](n+1) + ADP + H(+). Its pathway is glycan biosynthesis; glycogen biosynthesis. Synthesizes alpha-1,4-glucan chains using ADP-glucose. The protein is Glycogen synthase of Francisella tularensis subsp. tularensis (strain SCHU S4 / Schu 4).